We begin with the raw amino-acid sequence, 31 residues long: U14-ctenitoxin-Co1c (31 aa).

Expressed by the venom gland.

Its subcellular location is the secreted. Not toxic to mice by intracerebroventricular injection. The protein is U14-ctenitoxin-Co1c of Ctenus ornatus (Brazilian spider).